The chain runs to 1197 residues: ATP-dependent helicase/nuclease subunit A (1197 aa).

Residues 2–458 (RQWTKEQQAA…IDLAKNFRSR (457 aa)) form the UvrD-like helicase ATP-binding domain. ATP is bound at residue 23 to 30 (AAAGSGKT). The region spanning 485-774 (RAALYQGTEF…RIMSIHKSKG (290 aa)) is the UvrD-like helicase C-terminal domain.

The protein belongs to the helicase family. AddA subfamily. Heterodimer of AddA and AddB/RexB. The cofactor is Mg(2+).

It carries out the reaction Couples ATP hydrolysis with the unwinding of duplex DNA by translocating in the 3'-5' direction.. The enzyme catalyses ATP + H2O = ADP + phosphate + H(+). The heterodimer acts as both an ATP-dependent DNA helicase and an ATP-dependent, dual-direction single-stranded exonuclease. Recognizes the chi site generating a DNA molecule suitable for the initiation of homologous recombination. The AddA nuclease domain is required for chi fragment generation; this subunit has the helicase and 3' -&gt; 5' nuclease activities. In Alkaliphilus oremlandii (strain OhILAs) (Clostridium oremlandii (strain OhILAs)), this protein is ATP-dependent helicase/nuclease subunit A.